An 88-amino-acid chain; its full sequence is Small ribosomal subunit protein bS20 (88 aa).

A compositionally biased stretch (basic residues) spans 1–21 (MANSKSAKKRALQSEKRRQHN). Residues 1–26 (MANSKSAKKRALQSEKRRQHNASRSS) are disordered.

Belongs to the bacterial ribosomal protein bS20 family.

Binds directly to 16S ribosomal RNA. In Shewanella halifaxensis (strain HAW-EB4), this protein is Small ribosomal subunit protein bS20.